The following is a 555-amino-acid chain: 4-coumarate--CoA ligase-like 9 (555 aa).

Residues Ser200, Ser201, Gly202, Thr203, Thr204, and Lys208 each contribute to the ATP site. Tyr248 is a (E)-4-coumaroyl-AMP binding site. Arg269 contacts CoA. An SBD1 region spans residues 271-342 (DLRTFLRALV…RKFPGVQVEE (72 aa)). Residue Ala320 coordinates (E)-4-coumaroyl-AMP. Positions 342, 343, 347, 431, and 446 each coordinate ATP. 2 residues coordinate (E)-4-coumaroyl-AMP: Ala343 and Thr347. Residues 343-410 (AYGLTEHSCI…VRSQSVMQGY (68 aa)) form an SBD2 region. Positions 448 and 452 each coordinate (E)-4-coumaroyl-AMP. Residues Lys454 and Gly455 each coordinate CoA. An ATP-binding site is contributed by Lys537.

This sequence belongs to the ATP-dependent AMP-binding enzyme family. As to quaternary structure, interacts with STS1. The cofactor is Mg(2+).

The enzyme catalyses (E)-4-coumarate + ATP + CoA = (E)-4-coumaroyl-CoA + AMP + diphosphate. The catalysed reaction is (E)-4-coumarate + ATP + H(+) = (E)-4-coumaroyl-AMP + diphosphate. It carries out the reaction (E)-4-coumaroyl-AMP + CoA = (E)-4-coumaroyl-CoA + AMP + H(+). Carboxylate--CoA ligase that may use 4-coumarate as substrate. Follows a two-step reaction mechanism, wherein the carboxylate substrate first undergoes adenylation by ATP, followed by a thioesterification in the presence of CoA to yield the final CoA thioester. The protein is 4-coumarate--CoA ligase-like 9 (4CLL9) of Oryza sativa subsp. japonica (Rice).